The sequence spans 605 residues: ATP-dependent RNA helicase DBP3 (605 aa).

Residues 1-124 (MSAEELVASP…TPALSKKQQK (124 aa)) are disordered. The segment covering 54–66 (KDKKDKKEKKDKK) has biased composition (basic residues). Polar residues predominate over residues 104–114 (PVSTATPTESE). Residues 175–201 (LSIRDLPINSKLQPFLNKFEKPTPIQA) carry the Q motif motif. Residues 204–391 (WPALLSKKDV…STFLNNPLRI (188 aa)) enclose the Helicase ATP-binding domain. 217–224 (AETGSGKT) provides a ligand contact to ATP. The DEAD box motif lies at 336-339 (DEAD). Residues 424–575 (HLKAHLKVHP…EIPKEMDRFP (152 aa)) enclose the Helicase C-terminal domain.

This sequence belongs to the DEAD box helicase family. DDX5/DBP2 subfamily.

The protein resides in the nucleus. The protein localises to the nucleolus. The catalysed reaction is ATP + H2O = ADP + phosphate + H(+). In terms of biological role, ATP-dependent RNA helicase required for 60S ribosomal subunit synthesis. Involved in efficient pre-rRNA processing, predominantly at site A3, which is necessary for the normal formation of 25S and 5.8S rRNAs. The polypeptide is ATP-dependent RNA helicase DBP3 (DBP3) (Cryptococcus neoformans var. neoformans serotype D (strain JEC21 / ATCC MYA-565) (Filobasidiella neoformans)).